The sequence spans 336 residues: Aspartate--ammonia ligase (336 aa).

It belongs to the class-II aminoacyl-tRNA synthetase family. AsnA subfamily.

The protein localises to the cytoplasm. It catalyses the reaction L-aspartate + NH4(+) + ATP = L-asparagine + AMP + diphosphate + H(+). It participates in amino-acid biosynthesis; L-asparagine biosynthesis; L-asparagine from L-aspartate (ammonia route): step 1/1. In Limosilactobacillus fermentum (strain NBRC 3956 / LMG 18251) (Lactobacillus fermentum), this protein is Aspartate--ammonia ligase.